A 519-amino-acid polypeptide reads, in one-letter code: Protein nucleotidyltransferase YdiU (519 aa).

Residues glycine 100, glycine 102, arginine 103, lysine 123, aspartate 135, glycine 136, arginine 193, and arginine 200 each coordinate ATP. Aspartate 270 serves as the catalytic Proton acceptor. Positions 271 and 280 each coordinate Mg(2+). Residue aspartate 280 coordinates ATP.

The protein belongs to the SELO family. Mg(2+) is required as a cofactor. Requires Mn(2+) as cofactor.

It catalyses the reaction L-seryl-[protein] + ATP = 3-O-(5'-adenylyl)-L-seryl-[protein] + diphosphate. The catalysed reaction is L-threonyl-[protein] + ATP = 3-O-(5'-adenylyl)-L-threonyl-[protein] + diphosphate. The enzyme catalyses L-tyrosyl-[protein] + ATP = O-(5'-adenylyl)-L-tyrosyl-[protein] + diphosphate. It carries out the reaction L-histidyl-[protein] + UTP = N(tele)-(5'-uridylyl)-L-histidyl-[protein] + diphosphate. It catalyses the reaction L-seryl-[protein] + UTP = O-(5'-uridylyl)-L-seryl-[protein] + diphosphate. The catalysed reaction is L-tyrosyl-[protein] + UTP = O-(5'-uridylyl)-L-tyrosyl-[protein] + diphosphate. Its function is as follows. Nucleotidyltransferase involved in the post-translational modification of proteins. It can catalyze the addition of adenosine monophosphate (AMP) or uridine monophosphate (UMP) to a protein, resulting in modifications known as AMPylation and UMPylation. In Xylella fastidiosa (strain Temecula1 / ATCC 700964), this protein is Protein nucleotidyltransferase YdiU.